The following is a 918-amino-acid chain: Probable UDP-N-acetylglucosamine--peptide N-acetylglucosaminyltransferase SPINDLY (918 aa).

TPR repeat units lie at residues 34 to 66, 67 to 99, 101 to 132, 140 to 171, 172 to 205, 207 to 238, 239 to 271, 273 to 305, 306 to 339, 341 to 373, and 374 to 407; these read GKEA…SKNV, EAHI…DPHN, CALT…DPSY, ATVL…DPHY, APAC…SPTY, DAYC…NNMG, IALT…NWHY, DAMY…NPHC, AEAC…KPNF, QSLN…NPTY, and AEAY…DPDS. The tract at residues 408-918 is catalytic region; the sequence is RNAGQNRLLA…LNCGDQCFRV (511 aa). Positions 843-853 are enriched in polar residues; that stretch reads QLHQQPNTSPQ. The segment at 843-877 is disordered; it reads QLHQQPNTSPQKLVKDEPADDASGPEHGPASKDNP.

This sequence belongs to the glycosyltransferase 41 family. O-GlcNAc transferase subfamily.

Its subcellular location is the nucleus. It carries out the reaction L-seryl-[protein] + UDP-N-acetyl-alpha-D-glucosamine = 3-O-(N-acetyl-beta-D-glucosaminyl)-L-seryl-[protein] + UDP + H(+). The enzyme catalyses L-threonyl-[protein] + UDP-N-acetyl-alpha-D-glucosamine = 3-O-(N-acetyl-beta-D-glucosaminyl)-L-threonyl-[protein] + UDP + H(+). Its pathway is protein modification; protein glycosylation. Probable O-linked N-acetylglucosamine transferase (OGT) involved in various processes such as gibberellin (GA) signaling pathway. OGTs catalyze the addition of nucleotide-activated sugars directly onto the polypeptide through O-glycosidic linkage with the hydroxyl of serine or threonine. Probably acts by adding O-linked sugars to yet unknown proteins. May function as a negative regulator of GA signal transduction during vernalization, inhibiting adventitious shoot elongation during vernalization. The chain is Probable UDP-N-acetylglucosamine--peptide N-acetylglucosaminyltransferase SPINDLY (SPY) from Eustoma exaltatum subsp. russellianum (Bluebells).